Reading from the N-terminus, the 365-residue chain is 4-hydroxy-3-methylbut-2-en-1-yl diphosphate synthase (flavodoxin) (365 aa).

Residues C270, C273, C305, and E312 each coordinate [4Fe-4S] cluster.

Belongs to the IspG family. [4Fe-4S] cluster is required as a cofactor.

The catalysed reaction is (2E)-4-hydroxy-3-methylbut-2-enyl diphosphate + 2 oxidized [2Fe-2S]-[ferredoxin] + H2O = 2-C-methyl-D-erythritol 2,4-cyclic diphosphate + 2 reduced [2Fe-2S]-[ferredoxin] + H(+). It carries out the reaction (2E)-4-hydroxy-3-methylbut-2-enyl diphosphate + oxidized [flavodoxin] + H2O + 2 H(+) = 2-C-methyl-D-erythritol 2,4-cyclic diphosphate + reduced [flavodoxin]. Its pathway is isoprenoid biosynthesis; isopentenyl diphosphate biosynthesis via DXP pathway; isopentenyl diphosphate from 1-deoxy-D-xylulose 5-phosphate: step 5/6. Its function is as follows. Converts 2C-methyl-D-erythritol 2,4-cyclodiphosphate (ME-2,4cPP) into 1-hydroxy-2-methyl-2-(E)-butenyl 4-diphosphate. Involved in density-dependent regulation of 2'-N-acetyltransferase. The polypeptide is 4-hydroxy-3-methylbut-2-en-1-yl diphosphate synthase (flavodoxin) (Providencia stuartii).